The following is a 303-amino-acid chain: MEILPVGEESLGVRSMCLYVETRDVRILFDAGVSLAPRRFGLPPHPRELERARAVRSEILRLAAAADVITVSHYHRDHFTPWYPSVYMATDGETYRQIYGGKRVLLKSPDDLNWSQRRRHYGLSKALGDAGAELIYADGGEWRVGGTVIKASQSLWHGPAGSKTGRVVAFAVLDGEERLAFVPDVEGPVEPEPVAFLKEVRPTIAVVGGPPTYLPWDIEAAIRHLREVVDLAPRVLVVAHHALRSGDWREKLAPLFEYAEKRGVEIATYASLRGVGEELLEASRKELYKREPAEALVFEEEEE.

The protein belongs to the UPF0282 family.

The polypeptide is UPF0282 protein PAE3680 (Pyrobaculum aerophilum (strain ATCC 51768 / DSM 7523 / JCM 9630 / CIP 104966 / NBRC 100827 / IM2)).